Consider the following 32-residue polypeptide: U13-ctenitoxin-Pn1a (32 aa).

Intrachain disulfides connect Cys-3–Cys-17, Cys-10–Cys-21, and Cys-16–Cys-30.

As to expression, expressed by the venom gland.

It is found in the secreted. Functionally, acts as a neurotoxin. This chain is U13-ctenitoxin-Pn1a, found in Phoneutria nigriventer (Brazilian armed spider).